The chain runs to 519 residues: MMRSLHSLRRMSGTVLALMLAAGLPLSAAQAQPAKPAPKGDQKPATPAPSEQFVDGIAAIVNKDVITLREVREASKLASADLQKRGIQVPDERTLQKQVLQRLIMERLERQEADRMGIRVDEAQVDQAINMIASRNKITPAAMRAEIEKSGVTWEQYRKSLRDDIRMDRLRQRAVDANIIISDAEVDAFLKDQERNPAAAQATRAPAPQQPQPQPRQPAQSGPAMLVLAQILVRVPEGSSPDQVAALRKKAEGLLARAKKGDDFASLAAANSDGPEALQGGMMGARPLDGWPDLFVKAAGSLSAGQVSGLVQSGNGFHILKVVDRAGGGQPAQAARPAPAPAPQQPSSFQEGPSVAAPQGPVRVTQTHARHILIKTSTVMTDDQARQRLEQIRERLQGGAVKFEDMARQYSQDSTAPQGGDLGWVNPGDTVPPFEAAMNALQPNEISPPMLSPFGWHLIQVLERREHDVSDEVQRMRARQLLFERRAVPAFEDWLEQLRSQAFIDNRLEKQERLEQNNR.

The signal sequence occupies residues Met1–Ala31. 2 stretches are compositionally biased toward low complexity: residues Ala31 to Ala45 and Pro197 to Ala207. Disordered stretches follow at residues Ala31 to Ser50 and Asn196 to Ser221. In terms of domain architecture, PpiC 1 spans Pro223–Asp324. The interval Gly328–Pro361 is disordered. Residues Val364–Glu463 enclose the PpiC 2 domain.

It localises to the periplasm. It catalyses the reaction [protein]-peptidylproline (omega=180) = [protein]-peptidylproline (omega=0). Its function is as follows. Chaperone involved in the correct folding and assembly of outer membrane proteins. Recognizes specific patterns of aromatic residues and the orientation of their side chains, which are found more frequently in integral outer membrane proteins. May act in both early periplasmic and late outer membrane-associated steps of protein maturation. The chain is Chaperone SurA from Bordetella pertussis (strain Tohama I / ATCC BAA-589 / NCTC 13251).